Reading from the N-terminus, the 61-residue chain is Small ribosomal subunit protein uS14 (61 aa).

Zn(2+) is bound by residues cysteine 24, cysteine 27, cysteine 40, and cysteine 43.

It belongs to the universal ribosomal protein uS14 family. Zinc-binding uS14 subfamily. Part of the 30S ribosomal subunit. Contacts proteins S3 and S10. Requires Zn(2+) as cofactor.

Its function is as follows. Binds 16S rRNA, required for the assembly of 30S particles and may also be responsible for determining the conformation of the 16S rRNA at the A site. The polypeptide is Small ribosomal subunit protein uS14 (Beutenbergia cavernae (strain ATCC BAA-8 / DSM 12333 / CCUG 43141 / JCM 11478 / NBRC 16432 / NCIMB 13614 / HKI 0122)).